The primary structure comprises 589 residues: Oligo-1,6-glucosidase IMA2 (589 aa).

The Nucleophile role is filled by D215. E277 acts as the Proton donor in catalysis.

It belongs to the glycosyl hydrolase 13 family.

The enzyme catalyses Hydrolysis of (1-&gt;6)-alpha-D-glucosidic linkages in some oligosaccharides produced from starch and glycogen by alpha-amylase, and in isomaltose.. Its function is as follows. Alpha-glucosidase with specificity for isomaltase, methyl-alpha-glucoside, and palatinose. The sequence is that of Oligo-1,6-glucosidase IMA2 (IMA2) from Saccharomyces cerevisiae (strain ATCC 204508 / S288c) (Baker's yeast).